The primary structure comprises 456 residues: MCPGLWGTCFWLWGSLLWLSIGRSGNVPPTTQPKCTDFQSANLLRGTNLKVQFLLFTPSDPGCGQLVEEDSDIRNSEFNASLGTKLIIHGFRALGTKPSWINKFIRALLRAADANVIAVDWVYGSTGMYFSAVENVVKLSLEISRFLSKLLELGVSESSIHIIGVSLGAHVGGMVGHFYKGQLGRITGLDPAGPEYTRASLEERLDSGDALFVEAIHTDTDNLGIRIPVGHVDYFVNGGQDQPGCPAFIHAGYSYLICDHMRAVHLYISALENTCPLMAFPCASYKAFLAGDCLDCFNPFLLSCPRIGLVERGGVKIEPLPKEVRVYLQTTSSAPYCVHHSLVEFNLKEKRKKDTSIEVTFLGNNVTSSVKITIPKDHLEGRGIIAHQNPHCQINQVKLKFHISSRVWRKDRTPIVGTFCTAPLPVNDSKKTVCIPEPVRLQVSMAVLRDLKMACV.

The first 24 residues, 1–24 (MCPGLWGTCFWLWGSLLWLSIGRS), serve as a signal peptide directing secretion. The active-site Nucleophile is S166. The Charge relay system role is filled by D190. C245 and C258 are oxidised to a cystine. Residue H260 is the Charge relay system of the active site. 2 disulfides stabilise this stretch: C282/C293 and C296/C304. A glycan (N-linked (GlcNAc...) asparagine) is linked at N365.

It belongs to the AB hydrolase superfamily. Lipase family.

It is found in the secreted. The catalysed reaction is a 1,2-diacyl-sn-glycero-3-phospho-L-serine + H2O = a 2-acyl-sn-glycero-3-phospho-L-serine + a fatty acid + H(+). It carries out the reaction 1,2-di-(9Z)-octadecenoyl-sn-glycero-3-phospho-L-serine + H2O = 2-(9Z-octadecenoyl)-sn-glycero-3-phospho-L-serine + (9Z)-octadecenoate + H(+). The enzyme catalyses 1-hexadecanoyl-2-(5Z,8Z,11Z,14Z-eicosatetraenoyl)-sn-glycero-3-phospho-L-serine + H2O = 2-(5Z,8Z,11Z,14Z)-eicosatetraenoyl-sn-glycero-3-phospho-L-serine + hexadecanoate + H(+). It catalyses the reaction a 1-acyl-sn-glycero-3-phospho-L-serine + H2O = sn-glycero-3-phospho-L-serine + a fatty acid + H(+). The catalysed reaction is 1-(9Z-octadecenoyl)-sn-glycero-3-phospho-L-serine + H2O = sn-glycero-3-phospho-L-serine + (9Z)-octadecenoate + H(+). Hydrolyzes the ester bond of the acyl group attached at the sn-1 position of phosphatidylserines (phospholipase A1 activity) and 1-acyl-2-lysophosphatidylserines (lysophospholipase activity) in the pathway of phosphatidylserines acyl chain remodeling. Cleaves phosphatidylserines exposed on the outer leaflet of the plasma membrane of apoptotic cells producing 2-acyl-1-lysophosphatidylserines, which in turn enhance mast cell activation and histamine production. Has no activity toward other glycerophospholipids including phosphatidylcholines, phosphatidylethanolamines, phosphatidic acids or phosphatidylinositols, or glycerolipids such as triolein. This Rattus norvegicus (Rat) protein is Phospholipase A1 member A.